Reading from the N-terminus, the 216-residue chain is Minor fimbrial subunit HifD (216 aa).

The N-terminal stretch at 1 to 19 (MQKTPKKLTALCHQQSTAS) is a signal peptide. The N-palmitoyl cysteine moiety is linked to residue C20. C20 is lipidated: S-diacylglycerol cysteine. The disordered stretch occupies residues 159–180 (PINVDGSQANSEKAPDTGKEQN).

It belongs to the fimbrial protein family.

It is found in the cell membrane. The protein localises to the fimbrium. Functionally, may be a minor structural protein required for pilus biogenesis. The polypeptide is Minor fimbrial subunit HifD (hifD) (Haemophilus influenzae).